Reading from the N-terminus, the 389-residue chain is tRNA-specific 2-thiouridylase MnmA (389 aa).

Residues 9–16 (GMSGGVDS) and Met-35 contribute to the ATP site. The tract at residues 95 to 97 (NPD) is interaction with target base in tRNA. The Nucleophile role is filled by Cys-100. A disulfide bridge connects residues Cys-100 and Cys-196. Residue Gly-124 participates in ATP binding. The segment at 146 to 148 (KDQ) is interaction with tRNA. Catalysis depends on Cys-196, which acts as the Cysteine persulfide intermediate. The interaction with tRNA stretch occupies residues 308–309 (RY).

Belongs to the MnmA/TRMU family.

The protein resides in the cytoplasm. It carries out the reaction S-sulfanyl-L-cysteinyl-[protein] + uridine(34) in tRNA + AH2 + ATP = 2-thiouridine(34) in tRNA + L-cysteinyl-[protein] + A + AMP + diphosphate + H(+). In terms of biological role, catalyzes the 2-thiolation of uridine at the wobble position (U34) of tRNA, leading to the formation of s(2)U34. In Burkholderia ambifaria (strain MC40-6), this protein is tRNA-specific 2-thiouridylase MnmA.